The chain runs to 353 residues: Methionine import ATP-binding protein MetN (353 aa).

The ABC transporter domain maps to 11 to 251 (ITFDRVEKSF…PEHPTTRSFL (241 aa)). Position 48-55 (48-55 (GRSGAGKS)) interacts with ATP.

The protein belongs to the ABC transporter superfamily. Methionine importer (TC 3.A.1.24) family. The complex is composed of two ATP-binding proteins (MetN), two transmembrane proteins (MetI) and a solute-binding protein (MetQ).

The protein localises to the cell inner membrane. The catalysed reaction is L-methionine(out) + ATP + H2O = L-methionine(in) + ADP + phosphate + H(+). It carries out the reaction D-methionine(out) + ATP + H2O = D-methionine(in) + ADP + phosphate + H(+). In terms of biological role, part of the ABC transporter complex MetNIQ involved in methionine import. Responsible for energy coupling to the transport system. In Cereibacter sphaeroides (strain ATCC 17023 / DSM 158 / JCM 6121 / CCUG 31486 / LMG 2827 / NBRC 12203 / NCIMB 8253 / ATH 2.4.1.) (Rhodobacter sphaeroides), this protein is Methionine import ATP-binding protein MetN.